We begin with the raw amino-acid sequence, 476 residues long: Sulfate adenylyltransferase subunit 1 (476 aa).

Residues 24–228 (KSLLRFLTCG…MAWYQGPTLL (205 aa)) form the tr-type G domain. Residues 33–40 (GSVDDGKS) are G1. Residue 33 to 40 (GSVDDGKS) coordinates GTP. The interval 91 to 95 (GITID) is G2. Residues 112 to 115 (DTPG) form a G3 region. Residues 112 to 116 (DTPGH) and 167 to 170 (NKMD) contribute to the GTP site. Positions 167–170 (NKMD) are G4. The tract at residues 205-207 (SAL) is G5.

This sequence belongs to the TRAFAC class translation factor GTPase superfamily. Classic translation factor GTPase family. CysN/NodQ subfamily. In terms of assembly, heterodimer composed of CysD, the smaller subunit, and CysN.

It catalyses the reaction sulfate + ATP + H(+) = adenosine 5'-phosphosulfate + diphosphate. The protein operates within sulfur metabolism; hydrogen sulfide biosynthesis; sulfite from sulfate: step 1/3. Its function is as follows. With CysD forms the ATP sulfurylase (ATPS) that catalyzes the adenylation of sulfate producing adenosine 5'-phosphosulfate (APS) and diphosphate, the first enzymatic step in sulfur assimilation pathway. APS synthesis involves the formation of a high-energy phosphoric-sulfuric acid anhydride bond driven by GTP hydrolysis by CysN coupled to ATP hydrolysis by CysD. In Vibrio vulnificus (strain CMCP6), this protein is Sulfate adenylyltransferase subunit 1.